The sequence spans 498 residues: Myocyte-specific enhancer factor 2A (498 aa).

The 55-residue stretch at 3-57 (RKKIQITRIMDERNRQVTFTKRKFGLMKKAYELSVLCDCEIALIIFNSSNKLFQY) folds into the MADS-box domain. Positions 58–86 (ASTDMDKVLLKYTEYNEPHESRTNSDIVE) form a DNA-binding region, mef2-type. At serine 59 the chain carries Phosphoserine; by CK2. Phosphoserine is present on residues serine 98 and serine 108. At serine 108 the chain carries Phosphothreonine. Residues 172-220 (LADSSMLSPPPATLHRNVSPGAPQRPPSTGSASGMLSTTDLTVPNGAGN) are disordered. The span at 198-220 (PSTGSASGMLSTTDLTVPNGAGN) shows a compositional bias: polar residues. Phosphoserine is present on serine 233. Positions 240–268 (TGANSLGKVMPTKSPPPPGGGSLGMNSRK) are disordered. Position 247 is an N6-acetyllysine (lysine 247). Serine 253 carries the phosphoserine modification. The segment at 264 to 281 (MNSRKPDLRVVIPPSSKG) is required for interaction with MAPKs. The segment at 287-294 (SEEEELEL) is beta domain. Phosphothreonine; by MAPK7 is present on residues threonine 310 and threonine 317. A Phosphothreonine; by NLK modification is found at threonine 310. Phosphoserine; by MAPK7 is present on serine 353. Residues 388–400 (SNLSINTNQNINI) are compositionally biased toward polar residues. A disordered region spans residues 388–498 (SNLSINTNQN…KRMRMDTWVT (111 aa)). Lysine 401 carries the N6-acetyllysine; alternate modification. Residue lysine 401 forms a Glycyl lysine isopeptide (Lys-Gly) (interchain with G-Cter in SUMO); alternate linkage. Residue serine 406 is modified to Phosphoserine. Threonine 413 is modified (phosphothreonine). Over residues 426–436 (QQPPPQPPQPQ) the composition is skewed to pro residues. At serine 444 the chain carries Phosphoserine. Residues 444–457 (SPVDSLSSSSSSYD) are compositionally biased toward low complexity. 2 stretches are compositionally biased toward basic and acidic residues: residues 458 to 468 (GSDREDPRGDF) and 479 to 498 (NTEDRESPSVKRMRMDTWVT).

It belongs to the MEF2 family. In terms of assembly, binds DNA as a homo- or heterodimer. Dimerizes with MEF2D. Interacts with HDAC7. Interacts with PIAS1; the interaction enhances sumoylation. Interacts with HDAC4, HDAC9 and SLC2A4RG. Interacts (via the N-terminal) with MAPK7; the interaction results in the phosphorylation and transcriptional activity of MEF2A. Constitutive phosphorylation on Ser-406 promotes Lys-401 sumoylation thus preventing acetylation at this site. Dephosphorylation on Ser-406 by PPP3CA upon neuron depolarization promotes a switch from sumoylation to acetylation on residue Lys-403 leading to inhibition of dendrite claw differentiation. Phosphorylation on Thr-312 and Thr-319 are the main sites involved in p38 MAPK signaling and activate transcription. Phosphorylated on these sites by MAPK14/p38alpha and MAPK11/p38beta, but not by MAPK13/p38delta nor by MAPK12/p38gamma. Phosphorylation on Ser-408 by CDK5 induced by neurotoxicity inhibits MEF2A transcriptional activation leading to apoptosis of cortical neurons. Phosphorylation on Thr-312, Thr-319 and Ser-355 can be induced by EGF. Isoform 3 is phosphorylated on Ser-98 and Thr-108. In terms of processing, sumoylation on Lys-401 is enhanced by PIAS1 and represses transcriptional activity. Phosphorylation on Ser-406 is required for sumoylation. Has no effect on nuclear location nor on DNA binding. Sumoylated with SUMO1 and, to a lesser extent with SUMO2 and SUMO3. PIASx facilitates sumoylation in postsynaptic dendrites in the cerebellar cortex and promotes their morphogenesis. Post-translationally, acetylation on Lys-401 activates transcriptional activity. Acetylated by p300 on several sites in diffentiating myocytes. Acetylation on Lys-4 increases DNA binding and transactivation. Hyperacetylation by p300 leads to enhanced cardiac myocyte growth and heart failure. Proteolytically cleaved in cerebellar granule neurons on several sites by caspase 3 and caspase 7 following neurotoxicity. Preferentially cleaves the CDK5-mediated hyperphosphorylated form which leads to neuron apoptosis and transcriptional inactivation. As to expression, widely expressed though mainly restricted to skeletal and cardiac muscle, brain, neurons and lymphocytes. Differentially expressed depending on if isoforms contain the beta domain or not, with the total expression of the beta domain-lacking isoforms vastly exceeding that of the beta domain-containing isoforms. Isoforms containing the beta domain are expressed primarily in skeletal and cardiac muscle and in brain. Also present in lung and testis. Splicing to include the beta domain is induced in differentiating myocytes. Isoforms lacking the beta domain are expressed less abundantly in skeletal muscle, brain and lymphocytes, and are uniquely found in ovary, liver, spleen and kidney. In embryos, the beta domain-containing and beta domain-lacking isoforms are equally expressed. Also expressed cerebellar granule neurons and other regions of the CNS. Highest levels in the olfactory bulb, cortex, hippocampus, thalamus and cerebellum.

The protein resides in the nucleus. In terms of biological role, transcriptional activator which binds specifically to the MEF2 element, 5'-YTA[AT](4)TAR-3', found in numerous muscle-specific genes. Also involved in the activation of numerous growth factor- and stress-induced genes. Mediates cellular functions not only in skeletal and cardiac muscle development, but also in neuronal differentiation and survival. Plays diverse roles in the control of cell growth, survival and apoptosis via p38 MAPK signaling in muscle-specific and/or growth factor-related transcription. In cerebellar granule neurons, phosphorylated and sumoylated MEF2A represses transcription of NUR77 promoting synaptic differentiation. Associates with chromatin to the ZNF16 promoter. The polypeptide is Myocyte-specific enhancer factor 2A (Mef2a) (Mus musculus (Mouse)).